A 30-amino-acid chain; its full sequence is Cycloviolacin-O2 (30 aa).

A cross-link (cyclopeptide (Gly-Asn)) is located at residues 1 to 30; that stretch reads GIPCGESCVWIPCISSAIGCSCKSKVCYRN. 3 disulfide bridges follow: C4–C20, C8–C22, and C13–C27.

In terms of processing, this is a cyclic peptide.

Functionally, probably participates in a plant defense mechanism. The chain is Cycloviolacin-O2 from Viola biflora (Yellow wood violet).